Here is a 259-residue protein sequence, read N- to C-terminus: MQSDFHRMKNFANPKSMFKTSAPSTEQGRPEPPTSAAAPAEAKDVKPKEDPQETGEPAGNTATTTAPAGDDAVRTEHLYKHPLMNVWTLWYLENDRSKSWEDMQNEITSFDTVEDFWSLYNHIKPPSEIKLGSDYSLFKKNIRPMWEDAANKQGGRWVITLNKSSKTDLDNLWLDVLLCLIGEAFDHSDQICGAVINIRGKSNKISIWTADGNNEEAALEIGHKLRDALRLGRNNSLQYQLHKDTMVKQGSNVKSIYTL.

The segment at 1–70 (MQSDFHRMKN…TATTTAPAGD (70 aa)) is disordered. A compositionally biased stretch (polar residues) spans 18-27 (FKTSAPSTEQ). Residues 41-51 (EAKDVKPKEDP) show a composition bias toward basic and acidic residues. Positions 54–70 (TGEPAGNTATTTAPAGD) are enriched in low complexity. Residues 100–101 (WE), 146–147 (WE), and 199–204 (RGKSNK) contribute to the mRNA site.

Belongs to the eukaryotic initiation factor 4E family. As to quaternary structure, eIF4F is a multi-subunit complex, the composition of which varies with external and internal environmental conditions. It is composed of at least eIF4A, eIF4E1 and eIF4G1. Recruited by cup in oocytes and in early embryos, preventing the interaction with eIF4G. The interaction with cup therefore prevents the translation of key transcripts such as oskar (osk) and nanos (nos) in some regions in the early embryo. Interacts with mxt. Interacts with 4E-T and Thor. Forms a RNP containing at least me31B, eIF4E1, cup, tral and pAbp; this interaction is required for the translational silencing of maternal mRNAs during the maternal-to-zygotic transition. In terms of processing, phosphorylation increases the ability of the protein to bind to mRNA caps and to form the eIF4F complex. As to expression, expressed at the posterior end of developing oocytes (at protein level). Preferential expression in the pole cells, at different developmental stages.

The protein resides in the cytoplasm. It is found in the cytoplasmic ribonucleoprotein granule. Its subcellular location is the nucleus. It localises to the nuclear body. Functionally, recognizes and binds the 7-methylguanosine (m7G)-containing mRNA cap during an early step in the initiation of protein synthesis and facilitates ribosome binding by inducing the unwinding of the mRNAs secondary structures. In 0-1 hour embryos, forms a complex with me31B, cup, tral and pAbp which binds to various mRNAs including maternal mRNAs, and down-regulates their expression during the maternal-to-zygotic transition. This chain is Eukaryotic translation initiation factor 4E1, found in Drosophila melanogaster (Fruit fly).